The primary structure comprises 1073 residues: Probable nuclear hormone receptor HR38 (1073 aa).

7 disordered regions span residues 55 to 87 (NLNA…LPPP), 150 to 185 (TPAP…SNCD), 263 to 326 (TQTA…LVSP), 437 to 458 (ALHA…QQHQ), 492 to 514 (KYNS…APTP), 529 to 579 (PPLS…NSGG), and 618 to 640 (GQQQ…NGER). Low complexity-rich tracts occupy residues 59 to 82 (PTHQ…QQHP), 175 to 185 (DSNSDSNSNCD), and 263 to 277 (TQTA…ASAA). The segment covering 279-291 (HHQHHNHLLHQQH) has biased composition (basic residues). Composition is skewed to low complexity over residues 292–326 (HNQQ…LVSP), 441–458 (QQQQ…QQHQ), and 495–514 (SSSG…APTP). Positions 619–636 (QQQQQQQQSYQQHNYNSH) are enriched in low complexity. Residues 741 to 816 (SQLCAVCGDT…VGMVKEVVRT (76 aa)) constitute a DNA-binding region (nuclear receptor). 2 consecutive NR C4-type zinc fingers follow at residues 744-764 (CAVC…CEGC) and 780-804 (CLAD…FQKC). Positions 819-841 (LKGRRGRLPSKPKSPQESPPSPP) are disordered. In terms of domain architecture, NR LBD spans 840-1070 (PPISLITALV…ALIENMFVTT (231 aa)).

This sequence belongs to the nuclear hormone receptor family. NR4 subfamily. As to quaternary structure, forms a heterodimer with USP. Ubiquitously expressed in preblastoderm embryos, specifically in central nervous system and intestinal tract. Highly expressed in third instar larval imaginal disks and brain complexes, but not in ovaries.

The protein localises to the nucleus. Binds to NGFI-B response elements. Plays an important role in late stages of epidermal metamorphosis. This chain is Probable nuclear hormone receptor HR38 (Hr38), found in Drosophila melanogaster (Fruit fly).